We begin with the raw amino-acid sequence, 161 residues long: MAEEEPSSVSRDLQELQRKLGLLLESFQNNSKVVAFMKSPVGRFLDRHPFLVLTVLMFVTMSAIPVGFFLLIVVLTSLGALMGAILLEGLVISVCGLSLLCILCGLGFVSLALSGITMMSYVVVSCLMSYWFSPSRPPTQQHANIDSQLAMKFTESEKLGL.

At 1-43 (MAEEEPSSVSRDLQELQRKLGLLLESFQNNSKVVAFMKSPVGR) the chain is on the cytoplasmic side. The chain crosses the membrane as a helical span at residues 44-61 (FLDRHPFLVLTVLMFVTM). At 62 to 67 (SAIPVG) the chain is on the lumenal side. A helical membrane pass occupies residues 68 to 87 (FFLLIVVLTSLGALMGAILL). Residues 88-93 (EGLVIS) are Cytoplasmic-facing. Residues 94 to 110 (VCGLSLLCILCGLGFVS) traverse the membrane as a helical segment. The Lumenal segment spans residues 111–116 (LALSGI). Residues 117-133 (TMMSYVVVSCLMSYWFS) form a helical membrane-spanning segment. At 134–161 (PSRPPTQQHANIDSQLAMKFTESEKLGL) the chain is on the cytoplasmic side.

It belongs to the LDAF1 family. As to quaternary structure, interacts with BSCL2/seipin to form an oligomeric complex.

It is found in the endoplasmic reticulum membrane. Its subcellular location is the lipid droplet. Functionally, plays an important role in the formation of lipid droplets (LD) which are storage organelles at the center of lipid and energy homeostasis. In association with BSCL2/seipin, defines the sites of LD formation in the endoplasmic reticulum. The polypeptide is Lipid droplet assembly factor 1 (Rattus norvegicus (Rat)).